The following is a 283-amino-acid chain: Pantothenate synthetase (283 aa).

34 to 41 (MGALHDGH) provides a ligand contact to ATP. Residue His-41 is the Proton donor of the active site. A (R)-pantoate-binding site is contributed by Gln-65. Residue Gln-65 coordinates beta-alanine. 152–155 (GEKD) contributes to the ATP binding site. Gln-158 contributes to the (R)-pantoate binding site. ATP is bound by residues Val-181 and 189 to 192 (MSSR).

This sequence belongs to the pantothenate synthetase family. As to quaternary structure, homodimer.

The protein resides in the cytoplasm. It carries out the reaction (R)-pantoate + beta-alanine + ATP = (R)-pantothenate + AMP + diphosphate + H(+). It participates in cofactor biosynthesis; (R)-pantothenate biosynthesis; (R)-pantothenate from (R)-pantoate and beta-alanine: step 1/1. In terms of biological role, catalyzes the condensation of pantoate with beta-alanine in an ATP-dependent reaction via a pantoyl-adenylate intermediate. In Bradyrhizobium sp. (strain BTAi1 / ATCC BAA-1182), this protein is Pantothenate synthetase.